We begin with the raw amino-acid sequence, 446 residues long: NADH-dependent phenylglyoxylate dehydrogenase subunit beta (446 aa).

4 4Fe-4S ferredoxin-type domains span residues 6–35, 49–80, 82–111, and 109–141; these read STIA…TDDI, ADKT…KDGT, GVIG…LDEA, and DEAT…HITT.

In terms of assembly, dimer of heteropentamers composed of an alpha (PadG), a beta (PadI), a gamma (PadE), a delta (PadF) and an epsilon (PadH) subunit. The cofactor is [4Fe-4S] cluster.

The enzyme catalyses phenylglyoxylate + NAD(+) + CoA = benzoyl-CoA + CO2 + NADH. Activated by magnesium ions and thiamine diphosphate. Its function is as follows. Involved in the anaerobic metabolism of phenylalanine and phenylacetate. Catalyzes the oxidative decarboxylation of phenylglyoxylate to benzoyl-CoA and CO(2). It can also react slowly with 2-oxo-3-methylbutanoate and use different electron acceptors such as benzyl viologen, methyl viologen, FAD or FMN, but NAD seems to be the physiological electron acceptor. Also catalyzes an isotope exchange between CO(2) and the carboxyl group which proves partial or complete reversibility of the oxidative decarboxylation reaction. In Aromatoleum evansii (Azoarcus evansii), this protein is NADH-dependent phenylglyoxylate dehydrogenase subunit beta (padI).